Reading from the N-terminus, the 325-residue chain is Beta-ketoacyl-[acyl-carrier-protein] synthase III (325 aa).

Active-site residues include cysteine 116 and histidine 252. Positions 253 to 257 are ACP-binding; that stretch reads QANLR. Residue asparagine 282 is part of the active site.

Belongs to the thiolase-like superfamily. FabH family. Homodimer.

The protein localises to the cytoplasm. The enzyme catalyses malonyl-[ACP] + acetyl-CoA + H(+) = 3-oxobutanoyl-[ACP] + CO2 + CoA. It functions in the pathway lipid metabolism; fatty acid biosynthesis. In terms of biological role, catalyzes the condensation reaction of fatty acid synthesis by the addition to an acyl acceptor of two carbons from malonyl-ACP. Catalyzes the first condensation reaction which initiates fatty acid synthesis and may therefore play a role in governing the total rate of fatty acid production. Possesses both acetoacetyl-ACP synthase and acetyl transacylase activities. Its substrate specificity determines the biosynthesis of branched-chain and/or straight-chain of fatty acids. This is Beta-ketoacyl-[acyl-carrier-protein] synthase III from Xanthomonas oryzae pv. oryzae (strain MAFF 311018).